The sequence spans 548 residues: T-complex protein 1 subunit theta (548 aa).

A2 carries the N-acetylalanine modification. Residues Y47 and G48 each coordinate ADP. Residue D99 participates in Mg(2+) binding. G100, T101, N102, F103, M169, S170, K171, G412, and D499 together coordinate ADP. G100, T101, and N102 together coordinate ATP. ATP is bound by residues S170, K171, G412, D499, and K504. Y505 carries the post-translational modification Phosphotyrosine. Residues 529–548 (PAGGPKPPSGKKDWDEDQND) form a disordered region.

In terms of assembly, component of the chaperonin-containing T-complex (TRiC), a hexadecamer composed of two identical back-to-back stacked rings enclosing a protein folding chamber. Each ring is made up of eight different subunits: TCP1/CCT1, CCT2, CCT3, CCT4, CCT5, CCT6A/CCT6, CCT7, CCT8.

The protein localises to the cytoplasm. Its subcellular location is the cytoskeleton. The protein resides in the microtubule organizing center. It is found in the centrosome. It localises to the cilium basal body. It carries out the reaction ATP + H2O = ADP + phosphate + H(+). Component of the chaperonin-containing T-complex (TRiC), a molecular chaperone complex that assists the folding of actin, tubulin and other proteins upon ATP hydrolysis. This Gallus gallus (Chicken) protein is T-complex protein 1 subunit theta.